Reading from the N-terminus, the 257-residue chain is UPF0246 protein HAPS_0280 (257 aa).

This sequence belongs to the UPF0246 family.

The sequence is that of UPF0246 protein HAPS_0280 from Glaesserella parasuis serovar 5 (strain SH0165) (Haemophilus parasuis).